The following is a 339-amino-acid chain: 2-deoxy-scyllo-inosamine dehydrogenase (339 aa).

Zn(2+) is bound by residues Cys37, His59, Cys88, Cys91, Cys94, Cys102, and Glu143.

The protein belongs to the zinc-containing alcohol dehydrogenase family. DOIA dehydrogenase subfamily. Requires Zn(2+) as cofactor.

The catalysed reaction is 2-deoxy-scyllo-inosamine + NADP(+) = 3-amino-2,3-dideoxy-scyllo-inosose + NADPH + H(+). It carries out the reaction 2-deoxy-scyllo-inosamine + NAD(+) = 3-amino-2,3-dideoxy-scyllo-inosose + NADH + H(+). It participates in metabolic intermediate biosynthesis; 2-deoxystreptamine biosynthesis; 2-deoxystreptamine from D-glucose 6-phosphate: step 3/4. It functions in the pathway antibiotic biosynthesis; tobramycin biosynthesis. Functionally, catalyzes the oxidation of 2-deoxy-scyllo-inosamine (DOIA) with NAD(+) or NADP(+), forming 3-amino-2,3-dideoxy-scyllo-inosose (amino-DOI). The chain is 2-deoxy-scyllo-inosamine dehydrogenase (tobE) from Streptoalloteichus tenebrarius (strain ATCC 17920 / DSM 40477 / JCM 4838 / CBS 697.72 / NBRC 16177 / NCIMB 11028 / NRRL B-12390 / A12253. 1 / ISP 5477) (Streptomyces tenebrarius).